The following is a 494-amino-acid chain: MTNLTDLGIAAIRDGVARGDFTATEVATAFNAAVEAAQPALNAFIVTTPEEALEAAGKVDADRTAGRPLGKMAGVPIGMKDLFATRGTQTTAASKILEGFMPEYESTVSQKLWDAGAGMLGKLNLDQFAMGSSNETSAFGNVISPWRRPGDTAPLAPGGSSGGSSSAVAARIAPAATGTDTGGSIRQPAAFTGISGIKPTYGRCSRWGIVAFASSLDQAGPMARDVADCAIMLEAMAGFDPKDSTSLDMPVPEWTANLDPDMRGKKVGIPREYRLDGMDPDVARSWEDGIAWLKDAGAEIVEISLPHTKYALPTYYIIAPAEASSNLARYDGVRYGLRDLPEGAGLQDMYAATRAAGFGPEVKRRILIGTYVLSAGFYDAYYTQAQKVRTLISHDFTNAFREVDVILAPTAPSSAFALGEKSADPLEMYLNDVFSVPASLAGLPAMSVPAGLDRNGLPLGLQVIGRAFDEQGVLNAGLALEQRARFSARPAKWW.

Residues lysine 80 and serine 160 each act as charge relay system in the active site. The interval 140 to 168 (GNVISPWRRPGDTAPLAPGGSSGGSSSAV) is disordered. Serine 184 serves as the catalytic Acyl-ester intermediate.

It belongs to the amidase family. GatA subfamily. Heterotrimer of A, B and C subunits.

The enzyme catalyses L-glutamyl-tRNA(Gln) + L-glutamine + ATP + H2O = L-glutaminyl-tRNA(Gln) + L-glutamate + ADP + phosphate + H(+). Allows the formation of correctly charged Gln-tRNA(Gln) through the transamidation of misacylated Glu-tRNA(Gln) in organisms which lack glutaminyl-tRNA synthetase. The reaction takes place in the presence of glutamine and ATP through an activated gamma-phospho-Glu-tRNA(Gln). The protein is Glutamyl-tRNA(Gln) amidotransferase subunit A of Novosphingobium aromaticivorans (strain ATCC 700278 / DSM 12444 / CCUG 56034 / CIP 105152 / NBRC 16084 / F199).